Reading from the N-terminus, the 196-residue chain is Phosphoheptose isomerase (196 aa).

The SIS domain occupies leucine 34 to glycine 193. Position 49 to 51 (asparagine 49 to glycine 51) interacts with substrate. Histidine 58 and glutamate 62 together coordinate Zn(2+). Substrate contacts are provided by residues glutamate 62, asparagine 91–aspartate 92, serine 117–serine 119, serine 122, and glutamine 169. Residues glutamine 169 and histidine 177 each coordinate Zn(2+).

It belongs to the SIS family. GmhA subfamily. As to quaternary structure, homotetramer. The cofactor is Zn(2+).

It is found in the cytoplasm. The enzyme catalyses 2 D-sedoheptulose 7-phosphate = D-glycero-alpha-D-manno-heptose 7-phosphate + D-glycero-beta-D-manno-heptose 7-phosphate. The protein operates within carbohydrate biosynthesis; D-glycero-D-manno-heptose 7-phosphate biosynthesis; D-glycero-alpha-D-manno-heptose 7-phosphate and D-glycero-beta-D-manno-heptose 7-phosphate from sedoheptulose 7-phosphate: step 1/1. Functionally, catalyzes the isomerization of sedoheptulose 7-phosphate in D-glycero-D-manno-heptose 7-phosphate. The sequence is that of Phosphoheptose isomerase from Trichlorobacter lovleyi (strain ATCC BAA-1151 / DSM 17278 / SZ) (Geobacter lovleyi).